The chain runs to 374 residues: Chaperone protein DnaJ (374 aa).

The region spanning 5–70 (DYYEVLGVNL…RKRASYDQFG (66 aa)) is the J domain. A CR-type zinc finger spans residues 133–210 (GLSRTIKVPT…CHGQGRQQQT (78 aa)). Positions 146, 149, 162, 165, 184, 187, 198, and 201 each coordinate Zn(2+). CXXCXGXG motif repeat units follow at residues 146-153 (CKTCNGSG), 162-169 (CPRCNGSG), 184-191 (CSVCRGRG), and 198-205 (CTDCHGQG).

It belongs to the DnaJ family. In terms of assembly, homodimer. Zn(2+) serves as cofactor.

Its subcellular location is the cytoplasm. Its function is as follows. Participates actively in the response to hyperosmotic and heat shock by preventing the aggregation of stress-denatured proteins and by disaggregating proteins, also in an autonomous, DnaK-independent fashion. Unfolded proteins bind initially to DnaJ; upon interaction with the DnaJ-bound protein, DnaK hydrolyzes its bound ATP, resulting in the formation of a stable complex. GrpE releases ADP from DnaK; ATP binding to DnaK triggers the release of the substrate protein, thus completing the reaction cycle. Several rounds of ATP-dependent interactions between DnaJ, DnaK and GrpE are required for fully efficient folding. Also involved, together with DnaK and GrpE, in the DNA replication of plasmids through activation of initiation proteins. This is Chaperone protein DnaJ from Coxiella burnetii (strain RSA 331 / Henzerling II).